We begin with the raw amino-acid sequence, 833 residues long: DNA gyrase subunit A (833 aa).

The 464-residue stretch at 35–498 folds into the Topo IIA-type catalytic domain; the sequence is LPDVRDGMKP…SEDMFEDEDL (464 aa). Tyr123 acts as the O-(5'-phospho-DNA)-tyrosine intermediate in catalysis. The GyrA-box motif lies at 525-531; the sequence is QKRGGRG. The segment at 803 to 833 is disordered; it reads RVDIEDDELDEDESIEEERDDRSEVEQGENE. The span at 806–821 shows a compositional bias: acidic residues; the sequence is IEDDELDEDESIEEER.

The protein belongs to the type II topoisomerase GyrA/ParC subunit family. Heterotetramer, composed of two GyrA and two GyrB chains. In the heterotetramer, GyrA contains the active site tyrosine that forms a transient covalent intermediate with DNA, while GyrB binds cofactors and catalyzes ATP hydrolysis.

The protein localises to the cytoplasm. It carries out the reaction ATP-dependent breakage, passage and rejoining of double-stranded DNA.. In terms of biological role, a type II topoisomerase that negatively supercoils closed circular double-stranded (ds) DNA in an ATP-dependent manner to modulate DNA topology and maintain chromosomes in an underwound state. Negative supercoiling favors strand separation, and DNA replication, transcription, recombination and repair, all of which involve strand separation. Also able to catalyze the interconversion of other topological isomers of dsDNA rings, including catenanes and knotted rings. Type II topoisomerases break and join 2 DNA strands simultaneously in an ATP-dependent manner. In Halalkalibacterium halodurans (strain ATCC BAA-125 / DSM 18197 / FERM 7344 / JCM 9153 / C-125) (Bacillus halodurans), this protein is DNA gyrase subunit A.